We begin with the raw amino-acid sequence, 538 residues long: Putative cysteine ligase BshC (538 aa).

Residues 460 to 484 adopt a coiled-coil conformation; it reads KINEQIELLERMLKRNVEKKHEVEL.

This sequence belongs to the BshC family.

Involved in bacillithiol (BSH) biosynthesis. May catalyze the last step of the pathway, the addition of cysteine to glucosamine malate (GlcN-Mal) to generate BSH. In Bacillus thuringiensis (strain Al Hakam), this protein is Putative cysteine ligase BshC.